The following is a 341-amino-acid chain: LIM and senescent cell antigen-like-containing domain protein 2 (341 aa).

LIM zinc-binding domains are found at residues 13–74, 76–133, 138–195, 196–255, and 256–315; these read AVCQ…LFAP, CGSC…EKAK, YICQ…KMGV, PICG…LFGD, and VCYN…FPLE. Phe22 is modified (phosphoserine). The residue at position 327 (Thr327) is a Phosphothreonine. Position 328 is a phosphoserine (Ser328).

As to quaternary structure, interacts with TGFB1I1. Interacts with integrin-linked protein kinase 1 (ILK) via the first LIM domain, and in competition with LIMS1. Part of the heterotrimeric IPP complex composed of integrin-linked kinase (ILK), LIMS1 or LIMS2, and PARVA.

The protein localises to the nucleus. It localises to the cell junction. It is found in the focal adhesion. The protein resides in the cell membrane. Adapter protein in a cytoplasmic complex linking beta-integrins to the actin cytoskeleton, bridges the complex to cell surface receptor tyrosine kinases and growth factor receptors. Plays a role in modulating cell spreading and migration. This is LIM and senescent cell antigen-like-containing domain protein 2 (LIMS2) from Homo sapiens (Human).